The primary structure comprises 59 residues: Large ribosomal subunit protein bL32C (59 aa).

The protein belongs to the bacterial ribosomal protein bL32 family.

This chain is Large ribosomal subunit protein bL32C (rpmF3), found in Enterococcus faecalis (strain ATCC 700802 / V583).